The sequence spans 325 residues: Phosphate acyltransferase (325 aa).

It belongs to the PlsX family. In terms of assembly, homodimer. Probably interacts with PlsY.

It localises to the cytoplasm. The enzyme catalyses a fatty acyl-[ACP] + phosphate = an acyl phosphate + holo-[ACP]. It functions in the pathway lipid metabolism; phospholipid metabolism. Functionally, catalyzes the reversible formation of acyl-phosphate (acyl-PO(4)) from acyl-[acyl-carrier-protein] (acyl-ACP). This enzyme utilizes acyl-ACP as fatty acyl donor, but not acyl-CoA. This chain is Phosphate acyltransferase, found in Mycoplasmopsis pulmonis (strain UAB CTIP) (Mycoplasma pulmonis).